A 503-amino-acid chain; its full sequence is Maturase K (503 aa).

Belongs to the intron maturase 2 family. MatK subfamily.

It is found in the plastid. Its subcellular location is the chloroplast. Its function is as follows. Usually encoded in the trnK tRNA gene intron. Probably assists in splicing its own and other chloroplast group II introns. This chain is Maturase K, found in Agonis flexuosa (Australian willow myrtle).